We begin with the raw amino-acid sequence, 208 residues long: Thymidylate kinase (208 aa).

Residue 10–17 (GPEGSGKT) coordinates ATP.

Belongs to the thymidylate kinase family.

It catalyses the reaction dTMP + ATP = dTDP + ADP. Phosphorylation of dTMP to form dTDP in both de novo and salvage pathways of dTTP synthesis. In Bacillus mycoides (strain KBAB4) (Bacillus weihenstephanensis), this protein is Thymidylate kinase.